Here is a 342-residue protein sequence, read N- to C-terminus: Fatty acid desaturase 6 (342 aa).

2 consecutive transmembrane segments (helical) span residues 39–59 and 63–83; these read GVDC…FLCL and SPLV…TLTV. A Histidine box-1 motif is present at residues 87-91; that stretch reads HLATH. The Histidine box-2 signature appears at 124-128; sequence HVKMH. Transmembrane regions (helical) follow at residues 151–171 and 185–205; these read YVYM…VAVE and LGLI…VSGF. The Histidine box-3 signature appears at 277–281; it reads HVEHH.

This sequence belongs to the fatty acid desaturase type 1 family.

Its subcellular location is the membrane. The protein operates within lipid metabolism; fatty acid metabolism. The polypeptide is Fatty acid desaturase 6 (FADS6) (Bos taurus (Bovine)).